A 298-amino-acid polypeptide reads, in one-letter code: Probable deoxyhypusine synthase 2 (298 aa).

The active-site Nucleophile is Lys-259.

This sequence belongs to the deoxyhypusine synthase family. Requires NAD(+) as cofactor.

The catalysed reaction is [eIF5A protein]-L-lysine + spermidine = [eIF5A protein]-deoxyhypusine + propane-1,3-diamine. It functions in the pathway protein modification; eIF5A hypusination. Functionally, catalyzes the NAD-dependent oxidative cleavage of spermidine and the subsequent transfer of the butylamine moiety of spermidine to the epsilon-amino group of a specific lysine residue of the eIF-5A precursor protein to form the intermediate deoxyhypusine residue. In Archaeoglobus fulgidus (strain ATCC 49558 / DSM 4304 / JCM 9628 / NBRC 100126 / VC-16), this protein is Probable deoxyhypusine synthase 2 (dys2).